The sequence spans 339 residues: NADH-quinone oxidoreductase subunit H (339 aa).

9 helical membrane-spanning segments follow: residues F10–V30, P50–F70, I82–V102, V115–G135, M161–I181, I187–L207, M235–T255, I275–I295, and L310–L330.

Belongs to the complex I subunit 1 family. NDH-1 is composed of 14 different subunits. Subunits NuoA, H, J, K, L, M, N constitute the membrane sector of the complex.

The protein resides in the cell inner membrane. The enzyme catalyses a quinone + NADH + 5 H(+)(in) = a quinol + NAD(+) + 4 H(+)(out). In terms of biological role, NDH-1 shuttles electrons from NADH, via FMN and iron-sulfur (Fe-S) centers, to quinones in the respiratory chain. The immediate electron acceptor for the enzyme in this species is believed to be ubiquinone. Couples the redox reaction to proton translocation (for every two electrons transferred, four hydrogen ions are translocated across the cytoplasmic membrane), and thus conserves the redox energy in a proton gradient. This subunit may bind ubiquinone. The sequence is that of NADH-quinone oxidoreductase subunit H from Rickettsia canadensis (strain McKiel).